The following is a 380-amino-acid chain: Alanine racemase (380 aa).

The active-site Proton acceptor; specific for D-alanine is the K41. K41 is modified (N6-(pyridoxal phosphate)lysine). R141 is a substrate binding site. Residue Y271 is the Proton acceptor; specific for L-alanine of the active site. M318 is a substrate binding site.

Belongs to the alanine racemase family. Pyridoxal 5'-phosphate serves as cofactor.

The enzyme catalyses L-alanine = D-alanine. Its pathway is amino-acid biosynthesis; D-alanine biosynthesis; D-alanine from L-alanine: step 1/1. In terms of biological role, catalyzes the interconversion of L-alanine and D-alanine. May also act on other amino acids. The sequence is that of Alanine racemase (alr) from Latilactobacillus sakei subsp. sakei (strain 23K) (Lactobacillus sakei subsp. sakei).